Reading from the N-terminus, the 500-residue chain is Serine/threonine-protein phosphatase 2A 56 kDa regulatory subunit beta isoform (500 aa).

A compositionally biased stretch (low complexity) spans 1–19; the sequence is METKLPPASTPTSPSSPGL. Disordered stretches follow at residues 1–55 and 474–500; these read METK…YQSN and GTQG…GGQS. Phosphoserine; by CLK2 is present on residues S32, S35, S44, S46, S47, and S48. The span at 34–45 shows a compositional bias: basic residues; that stretch reads RSLRRARPRRSH.

Belongs to the phosphatase 2A regulatory subunit B56 family. Component of the serine/threonine-protein phosphatase 2A complex (PP2A). This complex consists of a common heterodimeric core enzyme, composed of a 36 kDa catalytic subunit (subunit C) and a 65 kDa constant scaffold subunit (PR65 or subunit A), that associates with a variety of regulatory subunits. Proteins that associate with the core dimer include three families of regulatory subunits B (the R2/B/PR55/B55, R3/B''/PR72/PR130/PR59 and R5/B'/B56 families), the 48 kDa variable regulatory subunit, viral proteins, and cell signaling molecules. Interacts with SGO1. Interacts with AKT1. In terms of tissue distribution, highly expressed in brain.

The protein resides in the nucleus. Functionally, as the regulatory component of the serine/threonine-protein phosphatase 2A (PP2A) holoenzyme, modulates substrate specificity, subcellular localization, and responsiveness to phosphorylation. The phosphorylated form mediates the interaction between PP2A and AKT1, leading to AKT1 dephosphorylation. The protein is Serine/threonine-protein phosphatase 2A 56 kDa regulatory subunit beta isoform (PPP2R5B) of Oryctolagus cuniculus (Rabbit).